Consider the following 479-residue polypeptide: Serine--tRNA ligase, mitochondrial (479 aa).

The N-terminal 42 residues, 1-42, are a transit peptide targeting the mitochondrion; it reads MRLTNRRFSTFLGNALPSKKKGFIFMSQLLYLRTFSTHTSYL. Residue 287-289 participates in L-serine binding; sequence TAE. 317–319 is an ATP binding site; sequence RRE. Glu-340 provides a ligand contact to L-serine. 404-407 contacts ATP; the sequence is EITS. L-serine is bound at residue Thr-438.

It belongs to the class-II aminoacyl-tRNA synthetase family. Type-1 seryl-tRNA synthetase subfamily. As to quaternary structure, homodimer. The tRNA molecule probably binds across the dimer.

The protein resides in the mitochondrion matrix. The catalysed reaction is tRNA(Ser) + L-serine + ATP = L-seryl-tRNA(Ser) + AMP + diphosphate + H(+). Its function is as follows. Catalyzes the attachment of serine to tRNA(Ser). Is also probably able to aminoacylate tRNA(Sec) with serine, to form the misacylated tRNA L-seryl-tRNA(Sec), which will be further converted into selenocysteinyl-tRNA(Sec). This chain is Serine--tRNA ligase, mitochondrial (dia4), found in Schizosaccharomyces pombe (strain 972 / ATCC 24843) (Fission yeast).